Consider the following 368-residue polypeptide: 3-isopropylmalate dehydrogenase (368 aa).

Position 79–92 (79–92 (GPRYEGLPWDLRPE)) interacts with NAD(+). Substrate contacts are provided by Arg-99, Arg-109, Arg-138, and Asp-228. Mg(2+) is bound by residues Asp-228, Asp-252, and Asp-256. 292–304 (GSAPDIAGQDRAN) contacts NAD(+).

It belongs to the isocitrate and isopropylmalate dehydrogenases family. LeuB type 1 subfamily. In terms of assembly, homodimer. Requires Mg(2+) as cofactor. Mn(2+) serves as cofactor.

Its subcellular location is the cytoplasm. The enzyme catalyses (2R,3S)-3-isopropylmalate + NAD(+) = 4-methyl-2-oxopentanoate + CO2 + NADH. It functions in the pathway amino-acid biosynthesis; L-leucine biosynthesis; L-leucine from 3-methyl-2-oxobutanoate: step 3/4. Its function is as follows. Catalyzes the oxidation of 3-carboxy-2-hydroxy-4-methylpentanoate (3-isopropylmalate) to 3-carboxy-4-methyl-2-oxopentanoate. The product decarboxylates to 4-methyl-2 oxopentanoate. This chain is 3-isopropylmalate dehydrogenase, found in Symbiobacterium thermophilum (strain DSM 24528 / JCM 14929 / IAM 14863 / T).